The chain runs to 95 residues: Small ribosomal subunit protein bS20c (95 aa).

The disordered stretch occupies residues 76–95 (NGSAKKAKLTKRLKEKKISL). The span at 80-95 (KKAKLTKRLKEKKISL) shows a compositional bias: basic residues.

It belongs to the bacterial ribosomal protein bS20 family.

The protein resides in the plastid. It is found in the chloroplast. Functionally, binds directly to 16S ribosomal RNA. The polypeptide is Small ribosomal subunit protein bS20c (Guillardia theta (Cryptophyte)).